Here is a 332-residue protein sequence, read N- to C-terminus: 2,3-diketo-L-gulonate reductase (332 aa).

His-44 functions as the Proton donor in the catalytic mechanism. NAD(+) contacts are provided by residues 168 to 174 (ITMVDMS), 224 to 225 (WK), and 304 to 306 (GHE).

It belongs to the LDH2/MDH2 oxidoreductase family. DlgD subfamily. Homodimer.

It is found in the cytoplasm. The enzyme catalyses 3-dehydro-L-gulonate + NAD(+) = 2,3-dioxo-L-gulonate + NADH + H(+). It carries out the reaction 3-dehydro-L-gulonate + NADP(+) = 2,3-dioxo-L-gulonate + NADPH + H(+). Its function is as follows. Catalyzes the reduction of 2,3-diketo-L-gulonate in the presence of NADH, to form 3-keto-L-gulonate. The sequence is that of 2,3-diketo-L-gulonate reductase from Haemophilus influenzae (strain ATCC 51907 / DSM 11121 / KW20 / Rd).